A 163-amino-acid polypeptide reads, in one-letter code: HTH-type transcriptional regulator IscR (163 aa).

In terms of domain architecture, HTH rrf2-type spans 2–131 (RLTSKGRYAV…NNITLGELVN (130 aa)). Residues 28–51 (LADISERQGISLSYLEQLFSRLRK) constitute a DNA-binding region (H-T-H motif). [2Fe-2S] cluster is bound by residues Cys-92, Cys-98, and Cys-104.

Requires [2Fe-2S] cluster as cofactor.

Regulates the transcription of several operons and genes involved in the biogenesis of Fe-S clusters and Fe-S-containing proteins. In Klebsiella pneumoniae subsp. pneumoniae (strain ATCC 700721 / MGH 78578), this protein is HTH-type transcriptional regulator IscR.